Reading from the N-terminus, the 101-residue chain is Small ribosomal subunit protein uS14 (101 aa).

Belongs to the universal ribosomal protein uS14 family. As to quaternary structure, part of the 30S ribosomal subunit. Contacts proteins S3 and S10.

Its function is as follows. Binds 16S rRNA, required for the assembly of 30S particles and may also be responsible for determining the conformation of the 16S rRNA at the A site. This Rhizobium meliloti (strain 1021) (Ensifer meliloti) protein is Small ribosomal subunit protein uS14.